The following is a 649-amino-acid chain: Alpha-amylase (649 aa).

Catalysis depends on Glu-124, which acts as the Nucleophile. Asp-215 (proton donor) is an active-site residue.

The protein belongs to the glycosyl hydrolase 57 family. As to quaternary structure, homodimer.

It catalyses the reaction Endohydrolysis of (1-&gt;4)-alpha-D-glucosidic linkages in polysaccharides containing three or more (1-&gt;4)-alpha-linked D-glucose units.. Displays a broad range of substrate specificity, with the capacity to hydrolyze carbohydrates as simple as maltotriose. The polypeptide is Alpha-amylase (amyA) (Pyrococcus furiosus (strain ATCC 43587 / DSM 3638 / JCM 8422 / Vc1)).